Here is a 640-residue protein sequence, read N- to C-terminus: Auxin efflux carrier component 3 (640 aa).

Residues 1–7 are Extracellular-facing; it reads MISWHDL. Residues 8-28 form a helical membrane-spanning segment; it reads YTVLTAVIPLYVAMILAYGSV. At 29 to 38 the chain is on the cytoplasmic side; it reads RWWKIFSPDQ. The helical transmembrane segment at 39–59 threads the bilayer; sequence CSGINRFVAIFAVPLLSFHFI. A (indol-3-yl)acetate-binding site is contributed by Val-51. Residues 60–71 are Extracellular-facing; it reads STNNPYAMNLRF. Residues 72–92 traverse the membrane as a helical segment; it reads IAADTLQKIIMLSLLVLWANF. At 93 to 101 the chain is on the cytoplasmic side; it reads TRSGSLEWS. Residues 102-122 traverse the membrane as a helical segment; sequence ITIFSLSTLPNTLVMGIPLLI. (indol-3-yl)acetate contacts are provided by Asn-112 and Leu-114. At 123 to 131 the chain is on the extracellular side; sequence AMYGEYSGS. The helical transmembrane segment at 132-152 threads the bilayer; the sequence is LMVQIVVLQCIIWYTLLLFLF. Tyr-145 contacts (indol-3-yl)acetate. Residues 153–500 lie on the Cytoplasmic side of the membrane; sequence EFRGAKMLIM…LIRNPNTYSS (348 aa). A phosphoserine mark is found at Ser-226, Ser-243, and Ser-283. The tract at residues 310 to 351 is disordered; that stretch reads APNPEFSSTTTSTANKSVNKNPKDVNTNQQTTLPTGGKSNSH. Residues 314–348 are compositionally biased toward polar residues; the sequence is EFSSTTTSTANKSVNKNPKDVNTNQQTTLPTGGKS. The residue at position 322 (Thr-322) is a Phosphothreonine. Ser-366 carries the post-translational modification Phosphoserine. 2 disordered regions span residues 372-391 and 404-471; these read AGLNVFGGAPDNDQGGRSDQ and SHNG…SQRK. Basic and acidic residues predominate over residues 430–442; sequence GKEEEAERPKDAE. The segment covering 449–460 has biased composition (polar residues); it reads APNSTAALQSKT. Residues 501-521 traverse the membrane as a helical segment; sequence LIGLIWALVAFRWHVAMPKII. At 522 to 524 the chain is on the extracellular side; that stretch reads QQS. A helical transmembrane segment spans residues 525–545; sequence ISILSDAGLGMAMFSLGLFMA. Over 546–559 the chain is Cytoplasmic; it reads LQPKLIACGNSVAT. The chain crosses the membrane as a helical span at residues 560 to 580; the sequence is FAMAVRFLTGPAVMAVAAIAI. The Extracellular portion of the chain corresponds to 581–585; that stretch reads GLRGD. The helical transmembrane segment at 586 to 606 threads the bilayer; that stretch reads LLRVAIVQAALPQGIVPFVFA. 2 residues coordinate (indol-3-yl)acetate: Ile-600 and Val-601. Residues 607-619 lie on the Cytoplasmic side of the membrane; sequence KEYNVHPAILSTG. A helical transmembrane segment spans residues 620 to 640; that stretch reads VIFGMLIALPITLVYYILLGL.

This sequence belongs to the auxin efflux carrier (TC 2.A.69.1) family. As to quaternary structure, homodimer. Predominantly expressed at the lateral side of shoot endodermis cells as well as root pericycle and columella cells.

The protein localises to the cell membrane. Auxin efflux carrier activity is competitively inhibited by naptalamate (N-1-naphthylphthalamic acid, NPA). In terms of biological role, acts as a component of the auxin efflux carrier; this activity is enhanced when activated by PID-mediated phosphorylation. Seems to be involved in the lateral auxin transport system. Together with PIN4 and PIN7, involved in the connective auxin transport (CAT) that ensures communication across the shoot system, and modulates strigolactone-mediated shoot branching control. Binds auxins including indole-3-acetic acid (IAA). Coordinated polar localization of PIN3 is directly regulated by the vesicle trafficking process. In Arabidopsis thaliana (Mouse-ear cress), this protein is Auxin efflux carrier component 3.